Reading from the N-terminus, the 391-residue chain is Processive diacylglycerol beta-glucosyltransferase (391 aa).

This sequence belongs to the glycosyltransferase 28 family. UgtP subfamily.

It is found in the cell membrane. The catalysed reaction is a 1,2-diacyl-3-O-(beta-D-glucopyranosyl)-sn-glycerol + UDP-alpha-D-glucose = a 1,2-diacyl-3-O-(beta-D-Glc-(1-&gt;6)-beta-D-Glc)-sn-glycerol + UDP + H(+). The enzyme catalyses a 1,2-diacyl-sn-glycerol + UDP-alpha-D-glucose = a 1,2-diacyl-3-O-(beta-D-glucopyranosyl)-sn-glycerol + UDP + H(+). Its pathway is glycolipid metabolism; diglucosyl-diacylglycerol biosynthesis. In terms of biological role, processive glucosyltransferase involved in the biosynthesis of both the bilayer- and non-bilayer-forming membrane glucolipids. Is able to successively transfer two glucosyl residues to diacylglycerol (DAG), thereby catalyzing the formation of beta-monoglucosyl-DAG (3-O-(beta-D-glucopyranosyl)-1,2-diacyl-sn-glycerol) and beta-diglucosyl-DAG (3-O-(beta-D-glucopyranosyl-beta-(1-&gt;6)-D-glucopyranosyl)-1,2-diacyl-sn-glycerol). Beta-diglucosyl-DAG is the predominant glycolipid found in Bacillales and is also used as a membrane anchor for lipoteichoic acid (LTA). This chain is Processive diacylglycerol beta-glucosyltransferase, found in Staphylococcus carnosus (strain TM300).